The chain runs to 350 residues: MRKVMKPMKDVGIVGYGAYVPMYRIRNEEIGRVWGVSSFPIEEKAVPGLDEDAITIGIEAARNALKRAKIDPQKIRAIWFGTESKPYAVKPSATIIAEAIGATPDLEAADFEFACKAGTEALQAAIGFVGSGMAEYAMAIGADTAQGRPGDHLEFTAGAGGAAFIVGEKSNESVAYFEGSYSYVTDTPDFWRRQHEHYPRHGNRFTGEPAYFHHIINAAKTLMEELGLKPSDFDYAVFHQPNVKFPLTVAKILGIPKEKVLPGLLTGRIGNTYSGATMVGVSAVLDIAKPGDRILWVSFGSGAGSNAFSIVVQDAIEEKRDLAPKVEDYVKRRKVIDYALYAKARRKYIL.

The Proton donor/acceptor role is filled by E83. C115 serves as the catalytic Acyl-thioester intermediate. 2 residues coordinate (3S)-3-hydroxy-3-methylglutaryl-CoA: C115 and T156. R204 lines the CoA pocket. The (3S)-3-hydroxy-3-methylglutaryl-CoA site is built by T206 and H239. The active-site Proton donor/acceptor is the H239. K244 provides a ligand contact to CoA. (3S)-3-hydroxy-3-methylglutaryl-CoA is bound by residues N271 and S301.

Belongs to the thiolase-like superfamily. Archaeal HMG-CoA synthase family. Interacts with acetoacetyl-CoA thiolase that catalyzes the precedent step in the pathway and with a DUF35 protein. The acetoacetyl-CoA thiolase/HMG-CoA synthase complex channels the intermediate via a fused CoA-binding site, which allows for efficient coupling of the endergonic thiolase reaction with the exergonic HMGCS reaction.

The catalysed reaction is acetoacetyl-CoA + acetyl-CoA + H2O = (3S)-3-hydroxy-3-methylglutaryl-CoA + CoA + H(+). The protein operates within metabolic intermediate biosynthesis; (R)-mevalonate biosynthesis; (R)-mevalonate from acetyl-CoA: step 2/3. In terms of biological role, catalyzes the condensation of acetyl-CoA with acetoacetyl-CoA to form 3-hydroxy-3-methylglutaryl-CoA (HMG-CoA). Functions in the mevalonate (MVA) pathway leading to isopentenyl diphosphate (IPP), a key precursor for the biosynthesis of isoprenoid compounds that are building blocks of archaeal membrane lipids. The polypeptide is Hydroxymethylglutaryl-CoA synthase (Pyrococcus furiosus (strain ATCC 43587 / DSM 3638 / JCM 8422 / Vc1)).